The primary structure comprises 754 residues: Bifunctional sesterterpene synthase astC (754 aa).

The signal sequence occupies residues 1–24 (MASLEVFVLYLRIFFISFMSRARS). The sesterterpene synthase stretch occupies residues 58–388 (IQYRHSKLVD…RYHFHKPEHW (331 aa)). Residues aspartate 149 and aspartate 153 each coordinate Mg(2+). A geranylfarnesyl diphosphate synthase region spans residues 389 to 753 (RQVENVDDDG…LRLLLKRLHV (365 aa)). Positions 392–403 (ENVDDDGNKSDD) are enriched in basic and acidic residues. The segment at 392–414 (ENVDDDGNKSDDSGIAMKDSPES) is disordered. Positions 512 and 516 each coordinate Mg(2+).

In the N-terminal section; belongs to the terpene synthase family. The protein in the C-terminal section; belongs to the FPP/GGPP synthase family. Mg(2+) is required as a cofactor.

The enzyme catalyses (2E,6E,10E,14E)-geranylfarnesyl diphosphate = preasperterpenoid A + diphosphate. It participates in secondary metabolite biosynthesis; terpenoid biosynthesis. Its function is as follows. Bifunctional sesterterpene synthase; part of the gene cluster that mediates the biosynthesis of the asperterpenoids, sesterterpenes that exhibit anti-tuberculosis activity. The first step of the pathway is performed by the sesterterpene synthase astC that possesses both prenyl transferase and terpene cyclase activity, converting isopentenyl diphosphate and dimethylallyl diphosphate into geranylfarnesyl diphosphate (GFPP) and further converting GFPP into preasperterpenoid A, respectively. The cytochrome P450 monooxygenase astB then dually oxidizes preasperterpenoid A to produce asperterpenoid A along with a minor product, asperterpenoid B. Finally, the cytochrome P450 monooxygenase astA converts asperterpenoid A into asperterpenoid C. The chain is Bifunctional sesterterpene synthase astC from Talaromyces wortmannii (Penicillium wortmannii).